A 623-amino-acid chain; its full sequence is MIVVTSFVRNSAVAAVASTPWNVRLRELAYQSLFSESISLYRSMLRSGSSPDAFSFPFILKSCASLSLPVSGQQLHCHVTKGGCETEPFVLTALISMYCKCGLVADARKVFEENPQSSQLSVCYNALISGYTANSKVTDAAYMFRRMKETGVSVDSVTMLGLVPLCTVPEYLWLGRSLHGQCVKGGLDSEVAVLNSFITMYMKCGSVEAGRRLFDEMPVKGLITWNAVISGYSQNGLAYDVLELYEQMKSSGVCPDPFTLVSVLSSCAHLGAKKIGHEVGKLVESNGFVPNVFVSNASISMYARCGNLAKARAVFDIMPVKSLVSWTAMIGCYGMHGMGEIGLMLFDDMIKRGIRPDGAVFVMVLSACSHSGLTDKGLELFRAMKREYKLEPGPEHYSCLVDLLGRAGRLDEAMEFIESMPVEPDGAVWGALLGACKIHKNVDMAELAFAKVIEFEPNNIGYYVLMSNIYSDSKNQEGIWRIRVMMRERAFRKKPGYSYVEHKGRVHLFLAGDRSHEQTEEVHRMLDELETSVMELAGNMDCDRGEEVSSTTREHSERLAIAFGILNSIPGTEILVIKNLRVCEDCHVFLKQVSKIVDRQFVVRDASRFHYFKDGVCSCKDYW.

The transit peptide at 1–35 directs the protein to the mitochondrion; sequence MIVVTSFVRNSAVAAVASTPWNVRLRELAYQSLFS. 12 PPR repeats span residues 17–51, 52–86, 87–117, 120–154, 155–189, 190–220, 221–255, 256–290, 291–321, 322–356, 357–387, and 393–423; these read ASTP…GSSP, DAFS…GCET, EPFV…NPQS, LSVC…GVSV, DSVT…GLDS, EVAV…MPVK, GLIT…GVCP, DPFT…GFVP, NVFV…MPVK, SLVS…GIRP, DGAV…MKRE, and GPEH…MPVE. The tract at residues 428 to 503 is type E motif; sequence VWGALLGACK…KPGYSYVEHK (76 aa). The interval 504-535 is type E(+) motif; sequence GRVHLFLAGDRSHEQTEEVHRMLDELETSVME. Positions 536-623 are type DYW motif; it reads LAGNMDCDRG…DGVCSCKDYW (88 aa).

Belongs to the PPR family. PCMP-H subfamily. Interacts with MORF8/RIP1.

The protein resides in the mitochondrion. Involved in C-to-U editing of mitochondrial RNA. Required specifically for editing the mitochondrial NAD2 transcript. This chain is Putative pentatricopeptide repeat-containing protein At3g11460, mitochondrial (PCMP-H52), found in Arabidopsis thaliana (Mouse-ear cress).